A 59-amino-acid chain; its full sequence is Cecropin-B2 (59 aa).

The first 23 residues, 1 to 23, serve as a signal peptide directing secretion; the sequence is MNFNKLFLIVILAALLLLGQTEA. A Leucine amide modification is found at leucine 57.

It belongs to the cecropin family.

Its subcellular location is the secreted. Its function is as follows. Cecropins have lytic and antibacterial activity against several Gram-positive and Gram-negative bacteria. The sequence is that of Cecropin-B2 (CECB2) from Culex pipiens pipiens (Northern house mosquito).